The chain runs to 786 residues: Endonuclease MutS2 (786 aa).

335–342 (GPNTGGKT) provides a ligand contact to ATP. The region spanning 711 to 786 (LDLRGERFEN…GLGVTVVELK (76 aa)) is the Smr domain.

It belongs to the DNA mismatch repair MutS family. MutS2 subfamily. Homodimer. Binds to stalled ribosomes, contacting rRNA.

Endonuclease that is involved in the suppression of homologous recombination and thus may have a key role in the control of bacterial genetic diversity. In terms of biological role, acts as a ribosome collision sensor, splitting the ribosome into its 2 subunits. Detects stalled/collided 70S ribosomes which it binds and splits by an ATP-hydrolysis driven conformational change. Acts upstream of the ribosome quality control system (RQC), a ribosome-associated complex that mediates the extraction of incompletely synthesized nascent chains from stalled ribosomes and their subsequent degradation. Probably generates substrates for RQC. In Bacillus cytotoxicus (strain DSM 22905 / CIP 110041 / 391-98 / NVH 391-98), this protein is Endonuclease MutS2.